Reading from the N-terminus, the 466-residue chain is 3-isopropylmalate dehydratase large subunit (466 aa).

Cys-349, Cys-410, and Cys-413 together coordinate [4Fe-4S] cluster.

It belongs to the aconitase/IPM isomerase family. LeuC type 1 subfamily. In terms of assembly, heterodimer of LeuC and LeuD. [4Fe-4S] cluster is required as a cofactor.

The catalysed reaction is (2R,3S)-3-isopropylmalate = (2S)-2-isopropylmalate. The protein operates within amino-acid biosynthesis; L-leucine biosynthesis; L-leucine from 3-methyl-2-oxobutanoate: step 2/4. Catalyzes the isomerization between 2-isopropylmalate and 3-isopropylmalate, via the formation of 2-isopropylmaleate. The polypeptide is 3-isopropylmalate dehydratase large subunit (Ruthia magnifica subsp. Calyptogena magnifica).